Reading from the N-terminus, the 198-residue chain is Inner membrane-spanning protein YciB (198 aa).

5 consecutive transmembrane segments (helical) span residues 36 to 56, 67 to 87, 90 to 110, 135 to 155, and 162 to 182; these read IYSATAMLIISSLVVYGALFI, LTLIACLVFGSLTLAFHSETF, WKAPVVNWLFALAFIGSHFIG, IAWIAFFLFCGAANLFVAFTF, and FKVFGSLGMTVLFLVGQGIYL.

It belongs to the YciB family.

Its subcellular location is the cell inner membrane. Plays a role in cell envelope biogenesis, maintenance of cell envelope integrity and membrane homeostasis. The sequence is that of Inner membrane-spanning protein YciB from Pseudomonas fluorescens (strain Pf0-1).